We begin with the raw amino-acid sequence, 177 residues long: Large ribosomal subunit protein uL6 (177 aa).

It belongs to the universal ribosomal protein uL6 family. In terms of assembly, part of the 50S ribosomal subunit.

Its function is as follows. This protein binds to the 23S rRNA, and is important in its secondary structure. It is located near the subunit interface in the base of the L7/L12 stalk, and near the tRNA binding site of the peptidyltransferase center. This chain is Large ribosomal subunit protein uL6, found in Janthinobacterium sp. (strain Marseille) (Minibacterium massiliensis).